The sequence spans 926 residues: Up-regulator of cell proliferation (926 aa).

Ser3 is modified (phosphoserine). The VLIG-type G domain occupies 689–924 (RSRLVVLSAL…NIQQLIELLR (236 aa)).

It belongs to the TRAFAC class dynamin-like GTPase superfamily. Very large inducible GTPase (VLIG) family.

It localises to the cytoplasm. It is found in the nucleus. Its function is as follows. May be involved in cell cycle progression through the regulation of cyclin D1 expression. This chain is Up-regulator of cell proliferation (Urgcp), found in Mus musculus (Mouse).